We begin with the raw amino-acid sequence, 1005 residues long: MTCTKDARLQLGREALQAAPTLLVPAVLLGGVLGLGLGLWLGCRASHLRARLQKDDRKRLLGSSEPPAQSLRDTGSQAKARRRQRETTRDEDAPEVCEPSLSGNITAFALKARVVYPINQKFRPLADGSSHPSLHENLTQAAAILPHLPHQPAEASPASSLGSLSQAGKEDGSSSSSMRSTYSDDRILQCAFLRVGSFPEILACESVDIDLCVCSLHLKDLLQVDTALRQEKHLMFIQILKACLLDFFPKKKPDDELCQKVLSKQEHDLEELEKGLQARLANTEMLGTGDSGYVSLADVERKERELSEQLIDNMGAFWKQMESIQPTLMDQFKCSSSKARQFMMTLTGRMIVAEGLLHDSQDLHVLDTLERTMGRSHLARMVEFLRTQIQEETKCRLAAISRGLELLTVQGQLSGRQKEELLTQQHKAFWEEAERFGREFTQRGKDLVQASQARQAEAAAELTQTQEEERRSFLADSQLTSDPGEFLKAFHEVLERQRLTRSDQEGDEDTRITEAMAALCQELYCSTMGTFQKFVDSLFLKTLPEVTSLPVAECETLRQQVQEQAARQLGQADRFRRRQWGLLCDLLEQDKRVWLEEGTLSTVLQRQLRDHHESTIHGVLSRFSGLSEESSRGILQGHELLLCSALRRLALRGTTITALAQMRLSGKKRLLQELHEQLALEQGVSPCLEEHQWQLLRALEARIQEEAARLEDEAQQTGLRLQQQLLAEAQEAGRLLQLHMERVIGQALLVHARNVASKGRTREKEDFKRTLVETVVESVYVTSTSVNRLVQAHYQAVGKLLQAHEEQLLQRLKTLQGERINAYKLWKKQEFSDPSLESQTADGTHGASQGVQQRMLSQQKRLLDQFTKHQQGRLNSQRQKAQELDQLQAQLETQLQEAEQTLISELSTLARVPLPENKPFSNKRGLPEKPVRTKRKKPPPREREDLGTPNDDHLALADHTTGPLSTTYSASPPIRVHSGGRLDQQDSEAGDGESTSKILQKGSNL.

Topologically, residues 1 to 21 (MTCTKDARLQLGREALQAAPT) are extracellular. Residues 22-42 (LLVPAVLLGGVLGLGLGLWLG) traverse the membrane as a helical segment. The Cytoplasmic segment spans residues 43-1005 (CRASHLRARL…SKILQKGSNL (963 aa)). Disordered stretches follow at residues 58-98 (KRLL…EVCE), 150-180 (HQPAEASPASSLGSLSQAGKEDGSSSSSMRS), 834-853 (PSLESQTADGTHGASQGVQQ), and 914-1005 (LPEN…GSNL). Composition is skewed to polar residues over residues 157-166 (PASSLGSLSQ) and 835-853 (SLESQTADGTHGASQGVQQ). The segment covering 939–956 (PPREREDLGTPNDDHLAL) has biased composition (basic and acidic residues). The segment covering 993-1005 (ESTSKILQKGSNL) has biased composition (polar residues).

In terms of assembly, component of the EvC complex composed of EFCAB7, IQCE, EVC2 and EVC; built from two subcomplexes, EVC2:EVC and EFCAB7:IQCE. Interacts with EVC2. Interacts with EFCAB7. Interacts with IQCE. As to expression, expressed in the developing skeleton and the orofacial region. Expression is general to all the cartilaginous components of the skeleton, including the chondrocranium, the vertebrae, the rib cage, and the axial skeleton by 15.5 dpc.

The protein localises to the cell membrane. The protein resides in the cytoplasm. It is found in the cytoskeleton. Its subcellular location is the cilium basal body. It localises to the cell projection. The protein localises to the cilium. The protein resides in the cilium membrane. Component of the EvC complex that positively regulates ciliary Hedgehog (Hh) signaling. Involved in endochondral growth and skeletal development. The chain is EvC complex member EVC (Evc) from Mus musculus (Mouse).